Reading from the N-terminus, the 235-residue chain is Probable WRKY transcription factor 66 (235 aa).

The WRKY DNA-binding region spans 79–147 (SPTPAHIDGF…YVGQHACEAP (69 aa)).

This sequence belongs to the WRKY group III family.

The protein resides in the nucleus. Its function is as follows. Transcription factor. Interacts specifically with the W box (5'-(T)TGAC[CT]-3'), a frequently occurring elicitor-responsive cis-acting element. This Arabidopsis thaliana (Mouse-ear cress) protein is Probable WRKY transcription factor 66 (WRKY66).